The primary structure comprises 459 residues: Transcription factor AP-2-beta (459 aa).

Residue K21 forms a Glycyl lysine isopeptide (Lys-Gly) (interchain with G-Cter in SUMO) linkage. A disordered region spans residues 30 to 139 (HDGVPSHSSR…PQLSGLDPRR (110 aa)). Residues 35–51 (SHSSRLSQLGSVSQGPY) are compositionally biased toward polar residues. A compositionally biased stretch (low complexity) spans 121–132 (LLPQPRAALPQL). A Phosphoserine; by PKA modification is found at S258. The interval 299 to 429 (RRKAANVTLL…YLTEALKGMD (131 aa)) is H-S-H (helix-span-helix), dimerization. The segment at 435–459 (NTTNRHTSGEGPGSKTGDKEEKHRK) is disordered. Residues 450 to 459 (TGDKEEKHRK) show a composition bias toward basic and acidic residues.

It belongs to the AP-2 family. Binds DNA as a dimer. Can form homodimers or heterodimers with other AP-2 family members. Interacts with CITED4. Interacts with UBE2I. Interacts with KCTD1; this interaction represses transcription activation. Interacts with CITED2 (via C-terminus); the interaction stimulates TFAP2B-transcriptional activity. Post-translationally, sumoylated. Sumoylated on Lys-21; which inhibits transcriptional activity. As to expression, localizes to neurons in areas of the cerebral cortex, cerebellum and hypothalamus (at protein level).

It localises to the nucleus. Functionally, sequence-specific DNA-binding protein that interacts with inducible viral and cellular enhancer elements to regulate transcription of selected genes. AP-2 factors bind to the consensus sequence 5'-GCCNNNGGC-3' and activate genes involved in a large spectrum of important biological functions including proper eye, face, body wall, limb and neural tube development. They also suppress a number of genes including MCAM/MUC18, C/EBP alpha and MYC. AP-2-beta appears to be required for normal face and limb development and for proper terminal differentiation and function of renal tubular epithelia. The chain is Transcription factor AP-2-beta (Tfap2b) from Mus musculus (Mouse).